We begin with the raw amino-acid sequence, 143 residues long: Large ribosomal subunit protein uL13 (143 aa).

Belongs to the universal ribosomal protein uL13 family. As to quaternary structure, part of the 50S ribosomal subunit.

Its function is as follows. This protein is one of the early assembly proteins of the 50S ribosomal subunit, although it is not seen to bind rRNA by itself. It is important during the early stages of 50S assembly. In Prochlorococcus marinus (strain MIT 9301), this protein is Large ribosomal subunit protein uL13.